The sequence spans 93 residues: Probable chloroethene reductive dehalogenase membrane anchor protein (93 aa).

A run of 3 helical transmembrane segments spans residues 3 to 23 (AIYF…FTWF), 35 to 55 (WVLG…TYAS), and 64 to 84 (SAWI…LFAA).

It belongs to the PceB family.

The protein localises to the cell membrane. Its function is as follows. May act as a membrane anchor for the chloroethene reductive dehalogenase VcrA. In Dehalococcoides mccartyi (strain VS), this protein is Probable chloroethene reductive dehalogenase membrane anchor protein.